We begin with the raw amino-acid sequence, 433 residues long: Glutamyl-tRNA reductase (433 aa).

Substrate-binding positions include 49-52, serine 114, 119-121, and glutamine 125; these read TCNR and EPQ. Residue cysteine 50 is the Nucleophile of the active site. 201–206 contributes to the NADP(+) binding site; the sequence is GAGETI.

The protein belongs to the glutamyl-tRNA reductase family. As to quaternary structure, homodimer.

It carries out the reaction (S)-4-amino-5-oxopentanoate + tRNA(Glu) + NADP(+) = L-glutamyl-tRNA(Glu) + NADPH + H(+). It participates in porphyrin-containing compound metabolism; protoporphyrin-IX biosynthesis; 5-aminolevulinate from L-glutamyl-tRNA(Glu): step 1/2. Catalyzes the NADPH-dependent reduction of glutamyl-tRNA(Glu) to glutamate 1-semialdehyde (GSA). The sequence is that of Glutamyl-tRNA reductase from Histophilus somni (strain 2336) (Haemophilus somnus).